Consider the following 339-residue polypeptide: Erlin-2 (339 aa).

The Cytoplasmic segment spans residues 1–3; the sequence is MAQ. A helical transmembrane segment spans residues 4 to 24; the sequence is LGAVVAVASSFFCASLFSAVH. Residues 25-339 lie on the Extracellular side of the membrane; it reads KIEEGHIGVY…EPLETATKDN (315 aa). Residue N106 is glycosylated (N-linked (GlcNAc...) asparagine). The segment at 177-309 is interaction with ERLIN1; the sequence is EAIRRNYELM…DIPNMFMDSA (133 aa). Position 267 is an N6-acetyllysine (K267).

It belongs to the band 7/mec-2 family. As to quaternary structure, forms a heteromeric complex with ERLIN1. In complex with ERLIN1, interacts with RNF170. Interacts with activated ITPR1, independently of the degree of ITPR1 polyubiquitination. Interacts with SCAP, INSIG1, SREBF1 and SREBF2 under cholesterol sufficiency conditions; indicative for an association with the SCAP-SREBP-INSIG complex. Probably part of an AMFR/gp78 and INSIG1-containing ubiquitin ligase complex involved in ERAD of HMGCR. Interacts with TMUB1; TMUB1 bridges the association with AMFR. Interacts with SYVN1 and RNF139. Interacts with TMEM259. Interacts with TMEM41B. Post-translationally, deubiquitinated by USP25; leading to stabilization.

It localises to the endoplasmic reticulum membrane. Functionally, component of the ERLIN1/ERLIN2 complex which mediates the endoplasmic reticulum-associated degradation (ERAD) of inositol 1,4,5-trisphosphate receptors (IP3Rs) such as ITPR1. Promotes sterol-accelerated ERAD of HMGCR probably implicating an AMFR/gp78-containing ubiquitin ligase complex. Involved in regulation of cellular cholesterol homeostasis by regulation the SREBP signaling pathway. May promote ER retention of the SCAP-SREBF complex. The chain is Erlin-2 from Rattus norvegicus (Rat).